The chain runs to 252 residues: MGRMSGEILDNRGRGTAGWSWPSIHPEGRKFGLIAAVASLGAALMAWETIAWPLAFLTLGVLAFFRDPVRVTPRDDRFVVSPADGLITLIQKVPPPRELCADDGSGVRGMNDAPVTRVSIFMSVFDVHINRSPIAGTIRRVVYIPGKFLNADLDKASEENERQHFLVERADGVQIGFTQIAGLIARRIVPFVKGGDIVAVGQRVGLIRFGSRVDVYLPAGTEPKVLMGQKVIAGETVLAEIGEAPMIEGIGQ.

Serine 211 (schiff-base intermediate with substrate; via pyruvic acid) is an active-site residue. Serine 211 is subject to Pyruvic acid (Ser); by autocatalysis.

Belongs to the phosphatidylserine decarboxylase family. PSD-A subfamily. As to quaternary structure, heterodimer of a large membrane-associated beta subunit and a small pyruvoyl-containing alpha subunit. Pyruvate serves as cofactor. In terms of processing, is synthesized initially as an inactive proenzyme. Formation of the active enzyme involves a self-maturation process in which the active site pyruvoyl group is generated from an internal serine residue via an autocatalytic post-translational modification. Two non-identical subunits are generated from the proenzyme in this reaction, and the pyruvate is formed at the N-terminus of the alpha chain, which is derived from the carboxyl end of the proenzyme. The post-translation cleavage follows an unusual pathway, termed non-hydrolytic serinolysis, in which the side chain hydroxyl group of the serine supplies its oxygen atom to form the C-terminus of the beta chain, while the remainder of the serine residue undergoes an oxidative deamination to produce ammonia and the pyruvoyl prosthetic group on the alpha chain.

It localises to the cell membrane. It catalyses the reaction a 1,2-diacyl-sn-glycero-3-phospho-L-serine + H(+) = a 1,2-diacyl-sn-glycero-3-phosphoethanolamine + CO2. Its pathway is phospholipid metabolism; phosphatidylethanolamine biosynthesis; phosphatidylethanolamine from CDP-diacylglycerol: step 2/2. Its function is as follows. Catalyzes the formation of phosphatidylethanolamine (PtdEtn) from phosphatidylserine (PtdSer). The chain is Phosphatidylserine decarboxylase proenzyme from Novosphingobium aromaticivorans (strain ATCC 700278 / DSM 12444 / CCUG 56034 / CIP 105152 / NBRC 16084 / F199).